The primary structure comprises 452 residues: Exodeoxyribonuclease 7 large subunit (452 aa).

It belongs to the XseA family. In terms of assembly, heterooligomer composed of large and small subunits.

It localises to the cytoplasm. The enzyme catalyses Exonucleolytic cleavage in either 5'- to 3'- or 3'- to 5'-direction to yield nucleoside 5'-phosphates.. Functionally, bidirectionally degrades single-stranded DNA into large acid-insoluble oligonucleotides, which are then degraded further into small acid-soluble oligonucleotides. In Bacillus cereus (strain G9842), this protein is Exodeoxyribonuclease 7 large subunit.